A 960-amino-acid chain; its full sequence is MTMTNPSGNTPDTSAGPAFRYTAELAGEIERSWQQYWIDNGTFNAPNPVGDLAVSGDKLPEDKLFVQDMFPYPSGAGLHVGHPLGYIATDVFARFNRMLGKNVLHTLGYDAFGLPAEQYAIQTGTHPRTTTMANIANMQRQLGALGLGHDPRRSVATTDPEFYKWTQWIFLQIFNAWFDTKQQKARPISELIPLLESGEVALPEGFEGSADSYSELDAVEKAKVVDEFRLVYRSHSMVNWCPGLGTVLANEEVTADGRSERGNFPVFRKKLSQWMMRITAYSDRLIDDLDLLDWPDKVKSMQRNWIGRSRGAEVDFDALGHTITVFTTRPDTLFGASYMVLAPEHELVDALVAAGTNSYEGIDPRWTFGQATPAEAVKAYRASIAAKSDLERQENKEKTGVYLGVNAVNPVNGESIPVFIGDYVLTGYGTGAIMAVPAHDTRDYEFATEFGLPIREVVAGGNIAEAAYTESGAAVNSANDQGLDINGLDKQEAIAQVIEWLVDKQKGSEKIQYKLRDWLFARQRYWGEPFPVVYDENGLAHALPESMLPVELPEVEDYKPVSFDPDDADSEPHPPLAKATEWTQVELDLGDGLKKYTRDTNVMPQWAGSSWYQLRYIDPTNSEAFCDIENERYWTGPRSAEDSGGVDLYVGGVEHAVLHLLYSRFWHKVLFDLGFVTSREPYRRLFNQGYIQAFAYTDSRGVYVPAEEVEEKDGKFYYQGEEVNQEYGKMGKSLKNAVAPDDICRDFGADTLRVYEMAMGPLDTSRPWSTKDVIGAHRFLQRLWRLVVSEDDGSIVVTDAALTDDDLKQLHRTIAGMRDDYEGLRINTVVAKAIEYVNYLTKAYGSTGAPRAAVEPLVIMVAAVAPHIAEELWKRLGHNDTITFVPFPEYEDKWLVDDEVEMPVQINGKVRARIMVPADASQDQISEIALASEAVATHIEGKNVIKKIVVSGRMVNLVVK.

A 'HIGH' region motif is present at residues 71–82 (PYPSGAGLHVGH). The 'KMSKS' region motif lies at 729–733 (KMGKS). Lys732 lines the ATP pocket.

It belongs to the class-I aminoacyl-tRNA synthetase family.

It localises to the cytoplasm. It carries out the reaction tRNA(Leu) + L-leucine + ATP = L-leucyl-tRNA(Leu) + AMP + diphosphate. The chain is Leucine--tRNA ligase from Corynebacterium diphtheriae (strain ATCC 700971 / NCTC 13129 / Biotype gravis).